The primary structure comprises 334 residues: Probable quinone oxidoreductase (334 aa).

It belongs to the zinc-containing alcohol dehydrogenase family. Quinone oxidoreductase subfamily.

It carries out the reaction 2 a quinone + NADPH + H(+) = 2 a 1,4-benzosemiquinone + NADP(+). This chain is Probable quinone oxidoreductase (ZTA1), found in Saccharomyces cerevisiae (strain ATCC 204508 / S288c) (Baker's yeast).